The following is a 609-amino-acid chain: Transcription factor ntnD (609 aa).

A DNA-binding region (zn(2)-C6 fungal-type) is located at residues 1 to 7 (MCVGIEC). The tract at residues 46–104 (FRDQNESSLNRIHNRRTSNSQPSTRSINNTTTIPASNNEPLALSQPPSASSQNQVEKDQ) is disordered. Residues 51-84 (ESSLNRIHNRRTSNSQPSTRSINNTTTIPASNNE) show a composition bias toward polar residues. Positions 85 to 97 (PLALSQPPSASSQ) are enriched in low complexity.

It belongs to the TRI10 transcription regulator family.

It is found in the nucleus. In terms of biological role, transcription factor; part of the gene cluster that mediates the biosynthesis of meroterpenoids. The polypeptide is Transcription factor ntnD (Nectria sp).